The chain runs to 445 residues: Adenylosuccinate synthetase (445 aa).

Residues 24-30 (GDEGKGK) and 52-54 (GHT) each bind GTP. Catalysis depends on D25, which acts as the Proton acceptor. D25 and G52 together coordinate Mg(2+). Residues 25-28 (DEGK), 50-53 (NAGH), T147, R161, N238, T253, and R317 contribute to the IMP site. H53 serves as the catalytic Proton donor. 313–319 (TTTGRRR) provides a ligand contact to substrate. Residues R319, 345-347 (KLD), and 427-429 (GVG) each bind GTP.

It belongs to the adenylosuccinate synthetase family. Homodimer. It depends on Mg(2+) as a cofactor.

Its subcellular location is the cytoplasm. The enzyme catalyses IMP + L-aspartate + GTP = N(6)-(1,2-dicarboxyethyl)-AMP + GDP + phosphate + 2 H(+). It functions in the pathway purine metabolism; AMP biosynthesis via de novo pathway; AMP from IMP: step 1/2. In terms of biological role, plays an important role in the de novo pathway and in the salvage pathway of purine nucleotide biosynthesis. Catalyzes the first committed step in the biosynthesis of AMP from IMP. The polypeptide is Adenylosuccinate synthetase (Malassezia globosa (strain ATCC MYA-4612 / CBS 7966) (Dandruff-associated fungus)).